The sequence spans 130 residues: Protein NrdI (130 aa).

It belongs to the NrdI family.

Its function is as follows. Probably involved in ribonucleotide reductase function. In Bartonella bacilliformis (strain ATCC 35685 / KC583 / Herrer 020/F12,63), this protein is Protein NrdI.